A 130-amino-acid chain; its full sequence is Small ribosomal subunit protein uS11 (130 aa).

This sequence belongs to the universal ribosomal protein uS11 family. Part of the 30S ribosomal subunit. Interacts with proteins S7 and S18. Binds to IF-3.

Functionally, located on the platform of the 30S subunit, it bridges several disparate RNA helices of the 16S rRNA. Forms part of the Shine-Dalgarno cleft in the 70S ribosome. The chain is Small ribosomal subunit protein uS11 from Ruegeria pomeroyi (strain ATCC 700808 / DSM 15171 / DSS-3) (Silicibacter pomeroyi).